Consider the following 300-residue polypeptide: MSYRELIAELAREHAEEFSDALLELGALSVSVEDADADTPDEQPLFGEPGLTPDRTAWQRSRVIALLAPEHEPAVLLTAAANEIGLEAAPSFTVREVEEQDWVRLTQSQFDPIKIGERIWVVPSWHDAPDPEALVLELDPGLAFGTGSHPTTRLCMEWLEQSVQPGQSVLDYGCGSGILAILAKKCGADPVYGIDIDPQAVESARHNSERNRAEVTYGLPDACPTGEFDIVVANILSNPLKLMASMLSSKVKPGGRIALSGILARQADEVAQVYARWIDISVWREHEGWVCLSGTRRESH.

4 residues coordinate S-adenosyl-L-methionine: T152, G173, D195, and N234.

The protein belongs to the methyltransferase superfamily. PrmA family.

It localises to the cytoplasm. It catalyses the reaction L-lysyl-[protein] + 3 S-adenosyl-L-methionine = N(6),N(6),N(6)-trimethyl-L-lysyl-[protein] + 3 S-adenosyl-L-homocysteine + 3 H(+). Methylates ribosomal protein L11. The polypeptide is Ribosomal protein L11 methyltransferase (Paraburkholderia xenovorans (strain LB400)).